The chain runs to 253 residues: MRKPIIAGNWKMNKTVKEAKDFVNNLPTLPDEKEVESVICAPTIQLDALISLVNDGKAKGLKIGAQNTYFEDNGAFTGETSPVALADLGVKYVVIGHSERRELFHETDEDVNKKAHAVFNHGMTPIICVGETDEERENGKANEIVSNQVEKALEGLSEEQLKEVVIAYEPIWAIGTGKSATSDDANEMCAHVRKTVAKVASQDVADATRIQYGGSVKPNNVKEYMAQSDIDGALVGGASLKVEDFVQLLEGAK.

9–11 (NWK) serves as a coordination point for substrate. The Electrophile role is filled by histidine 97. The Proton acceptor role is filled by glutamate 169. Substrate is bound by residues glycine 175, serine 215, and 236 to 237 (GG).

Belongs to the triosephosphate isomerase family. In terms of assembly, homodimer.

It localises to the cytoplasm. The enzyme catalyses D-glyceraldehyde 3-phosphate = dihydroxyacetone phosphate. The protein operates within carbohydrate biosynthesis; gluconeogenesis. Its pathway is carbohydrate degradation; glycolysis; D-glyceraldehyde 3-phosphate from glycerone phosphate: step 1/1. Involved in the gluconeogenesis. Catalyzes stereospecifically the conversion of dihydroxyacetone phosphate (DHAP) to D-glyceraldehyde-3-phosphate (G3P). The sequence is that of Triosephosphate isomerase from Staphylococcus haemolyticus (strain JCSC1435).